We begin with the raw amino-acid sequence, 1108 residues long: Ubiquitin carboxyl-terminal hydrolase 5 (1108 aa).

In terms of domain architecture, MATH spans 55 to 187 (FQRFTWHIKS…DGALLLTAYV (133 aa)). Active-site nucleophile residues include Cys120 and Cys222. Positions 213 to 528 (VGLKNQGATC…SAYMLLYLRK (316 aa)) constitute a USP domain. The active-site Proton acceptor is the His464.

Belongs to the peptidase C19 family.

The protein localises to the nucleus. It carries out the reaction Thiol-dependent hydrolysis of ester, thioester, amide, peptide and isopeptide bonds formed by the C-terminal Gly of ubiquitin (a 76-residue protein attached to proteins as an intracellular targeting signal).. Functionally, hydrolase that deubiquitinates target proteins. Cleaves the UBL propeptide in sde2. The polypeptide is Ubiquitin carboxyl-terminal hydrolase 5 (ubp5) (Schizosaccharomyces pombe (strain 972 / ATCC 24843) (Fission yeast)).